Reading from the N-terminus, the 423-residue chain is Histidine--tRNA ligase (423 aa).

This sequence belongs to the class-II aminoacyl-tRNA synthetase family. In terms of assembly, homodimer.

It localises to the cytoplasm. The enzyme catalyses tRNA(His) + L-histidine + ATP = L-histidyl-tRNA(His) + AMP + diphosphate + H(+). In Shewanella loihica (strain ATCC BAA-1088 / PV-4), this protein is Histidine--tRNA ligase.